The chain runs to 273 residues: Homeobox protein HMX2 (273 aa).

The interval 1-152 is disordered; the sequence is MGSKEDAGKG…RQAGAAKKKT (152 aa). Positions 93–102 are enriched in gly residues; the sequence is KGSGGSGPGG. Positions 114–123 are enriched in basic and acidic residues; it reads SDFKEEKERL. Positions 149–208 form a DNA-binding region, homeobox; the sequence is KKKTRTVFSRSQVYQLESTFDMKRYLSSSERACLASSLQLTETQVKTWFQNRRNKWKRQL.

This sequence belongs to the HMX homeobox family.

Its subcellular location is the nucleus. Transcription factor involved in specification of neuronal cell types and which is required for inner ear and hypothalamus development. The sequence is that of Homeobox protein HMX2 (HMX2) from Homo sapiens (Human).